A 321-amino-acid chain; its full sequence is Glucokinase (321 aa).

8–13 is an ATP binding site; it reads GDVGGT.

The protein belongs to the bacterial glucokinase family.

The protein resides in the cytoplasm. It catalyses the reaction D-glucose + ATP = D-glucose 6-phosphate + ADP + H(+). This Shigella boydii serotype 18 (strain CDC 3083-94 / BS512) protein is Glucokinase.